Reading from the N-terminus, the 185-residue chain is MIKDILSDTEERMKKTIEHLRKDLASLRAGRANPAMLEKIMVDYYGQPTPINQLANITVPEARLLVIQPWDKTIIASIEKAIMKSDLGINPSNDGNVIRLVIPQLTEERRKELVKVLRKRAEEARVAVRNIRRDSNELLKSGEKEKLISEDDNKKGMDDIQKETDRHIKEIDSILQGKEKEIMEV.

Positions 143-163 (EKEKLISEDDNKKGMDDIQKE) are disordered.

This sequence belongs to the RRF family.

It is found in the cytoplasm. Responsible for the release of ribosomes from messenger RNA at the termination of protein biosynthesis. May increase the efficiency of translation by recycling ribosomes from one round of translation to another. The sequence is that of Ribosome-recycling factor from Syntrophomonas wolfei subsp. wolfei (strain DSM 2245B / Goettingen).